Reading from the N-terminus, the 199-residue chain is Putative inactive ribonuclease 11 (199 aa).

Positions 1–16 (METFPLLLLSLGLVLA) are cleaved as a signal peptide. N-linked (GlcNAc...) asparagine glycosylation occurs at Asn-61. Catalysis depends on His-82, which acts as the Proton acceptor. Asn-89 and Asn-111 each carry an N-linked (GlcNAc...) asparagine glycan. 2 disulfides stabilise this stretch: Cys-98/Cys-158 and Cys-114/Cys-169. 115–119 (KWSNN) is a substrate binding site.

It belongs to the pancreatic ribonuclease family.

The protein resides in the secreted. The polypeptide is Putative inactive ribonuclease 11 (RNASE11) (Homo sapiens (Human)).